We begin with the raw amino-acid sequence, 593 residues long: NADH-quinone oxidoreductase subunit C/D (593 aa).

The tract at residues 1-184 is NADH dehydrogenase I subunit C; that stretch reads MTTGSALYIP…DPFSLNLAKQ (184 aa). Residues 208–593 are NADH dehydrogenase I subunit D; it reads DYMFLNLGPN…IDFVMADVDR (386 aa).

The protein in the N-terminal section; belongs to the complex I 30 kDa subunit family. In the C-terminal section; belongs to the complex I 49 kDa subunit family. NDH-1 is composed of 13 different subunits. Subunits NuoB, CD, E, F, and G constitute the peripheral sector of the complex.

The protein resides in the cell inner membrane. It carries out the reaction a quinone + NADH + 5 H(+)(in) = a quinol + NAD(+) + 4 H(+)(out). In terms of biological role, NDH-1 shuttles electrons from NADH, via FMN and iron-sulfur (Fe-S) centers, to quinones in the respiratory chain. The immediate electron acceptor for the enzyme in this species is believed to be ubiquinone. Couples the redox reaction to proton translocation (for every two electrons transferred, four hydrogen ions are translocated across the cytoplasmic membrane), and thus conserves the redox energy in a proton gradient. The protein is NADH-quinone oxidoreductase subunit C/D of Pseudomonas fluorescens (strain ATCC BAA-477 / NRRL B-23932 / Pf-5).